The chain runs to 160 residues: Transcription antitermination protein NusB (160 aa).

The protein belongs to the NusB family.

In terms of biological role, involved in transcription antitermination. Required for transcription of ribosomal RNA (rRNA) genes. Binds specifically to the boxA antiterminator sequence of the ribosomal RNA (rrn) operons. In Rhizobium etli (strain CIAT 652), this protein is Transcription antitermination protein NusB.